A 1364-amino-acid polypeptide reads, in one-letter code: Outer kinetochore KNL1 complex subunit spc7 (1364 aa).

Residues 1–15 (MPTSPRRNSIATTDN) are compositionally biased toward polar residues. Disordered stretches follow at residues 1–36 (MPTS…GALQ), 124–190 (YPKD…DIAS), and 202–223 (EALN…LSIQ). Over residues 124–136 (YPKDHQSDSEKST) the composition is skewed to basic and acidic residues. The segment covering 157-169 (GPTTTSFSRNETQ) has biased composition (polar residues). The segment covering 170–181 (SSPHSHSASIIS) has biased composition (low complexity). The MELT; degenerate motif lies at 254–257 (MDLT). A Phosphothreonine; by mph1 modification is found at T257. The interval 289–334 (ASHDPSNQTQLSSPNKSSSPTSIEISDFSKNNENHDQSENKEEEED) is disordered. The span at 300 to 310 (SSPNKSSSPTS) shows a compositional bias: low complexity. Residues 318–328 (KNNENHDQSEN) show a composition bias toward basic and acidic residues. An MELT; degenerate motif is present at residues 450–453 (MDLT). The residue at position 453 (T453) is a Phosphothreonine; by mph1. The tract at residues 456-503 (ISSTNAPTHLNEDDLNQFTSNISSSSKPRKDNNKTANSSKPIPDSEDF) is disordered. The span at 471–481 (NQFTSNISSSS) shows a compositional bias: polar residues. An MELT; degenerate motif is present at residues 504 to 507 (MDIT). T507 carries the post-translational modification Phosphothreonine; by mph1. Disordered stretches follow at residues 564–643 (LPSA…SSFD) and 697–837 (GATP…GVSN). Over residues 566–585 (SADKENAEREEIPSYSDKSE) the composition is skewed to basic and acidic residues. The segment covering 586 to 617 (NFNTTSFTNHERSPNGNNNLKFSKDPNSSSPS) has biased composition (polar residues). A compositionally biased stretch (basic and acidic residues) spans 719 to 730 (EVSRQPTDDKGE). Positions 747 to 773 (LTIQQTNEIKHVPTNTTSSVKLPQQPS) are enriched in polar residues. Positions 791–802 (SLERLESQEPNR) are enriched in basic and acidic residues. A compositionally biased stretch (polar residues) spans 808–820 (VGSSNAGNTTSVG). A coiled-coil region spans residues 1075–1155 (LAQAQEKLEK…EEQLLNLKNE (81 aa)). A Nuclear localization signal motif is present at residues 1091-1105 (RRRRLLSEKEERRKE).

As to quaternary structure, component of the KNL1/SPC105 complex composed of at least spc7 and sos7. Part of the outer kinetochore KMN network that includes the KNL1, MIS12 and NDC80 complexes. Interacts (via C-terminus) with sos7 (via C-terminus); the interaction is direct. Interacts (when phosphorylated on MELT motifs) with bub1 and bub3; to recruit the BUB1-BUB3 complex to the kinetochore. Phosphorylation of threonine residues in the MELT motifs by mph1/mps1 leads to recruitment of bub1 and bub3 to the kinetochore, and is required to maintain spindle assembly checkpoint signaling.

It is found in the nucleus. The protein resides in the chromosome. It localises to the centromere. Its subcellular location is the kinetochore. Its function is as follows. Acts as a component of the outer kinetochore KNL1 complex that serves as a docking point for spindle assembly checkpoint components and mediates microtubule-kinetochore interactions. Kinetochores, consisting of a centromere-associated inner segment and a microtubule-contacting outer segment, play a crucial role in chromosome segregation by mediating the physical connection between centromeric DNA and spindle microtubules. The outer kinetochore is made up of the ten-subunit KMN network, comprising the MIS12, NDC80 and KNL1 complexes, and auxiliary microtubule-associated components; together they connect the outer kinetochore with the inner kinetochore, bind microtubules, and mediate interactions with mitotic checkpoint proteins that delay anaphase until chromosomes are bioriented on the spindle. Recruits the BUB1-BUB3 complex to kinetochores when phosphorylated by mph1/mps1, to support spindle assembly checkpoint signaling. Functions both in mitotic and in meiotic chromosome segregation. The chain is Outer kinetochore KNL1 complex subunit spc7 from Schizosaccharomyces pombe (strain 972 / ATCC 24843) (Fission yeast).